The chain runs to 144 residues: Prefoldin subunit alpha (144 aa).

This sequence belongs to the prefoldin alpha subunit family. In terms of assembly, heterohexamer of two alpha and four beta subunits.

The protein resides in the cytoplasm. Functionally, molecular chaperone capable of stabilizing a range of proteins. Seems to fulfill an ATP-independent, HSP70-like function in archaeal de novo protein folding. The sequence is that of Prefoldin subunit alpha from Methanococcus maripaludis (strain C5 / ATCC BAA-1333).